A 273-amino-acid chain; its full sequence is Phosphate import ATP-binding protein PstB (273 aa).

Residues 26–268 form the ABC transporter domain; it reads MRGEKVCVFY…PTEKRTQDYI (243 aa). 58–65 serves as a coordination point for ATP; that stretch reads GPSGCGKS.

Belongs to the ABC transporter superfamily. Phosphate importer (TC 3.A.1.7) family. In terms of assembly, the complex is composed of two ATP-binding proteins (PstB), two transmembrane proteins (PstC and PstA) and a solute-binding protein (PstS).

It localises to the cell inner membrane. It catalyses the reaction phosphate(out) + ATP + H2O = ADP + 2 phosphate(in) + H(+). Its function is as follows. Part of the ABC transporter complex PstSACB involved in phosphate import. Responsible for energy coupling to the transport system. The protein is Phosphate import ATP-binding protein PstB of Brucella abortus (strain 2308).